We begin with the raw amino-acid sequence, 103 residues long: uncharacterized protein (103 aa).

2 helical membrane passes run leucine 13–leucine 33 and phenylalanine 77–phenylalanine 97.

It is found in the endoplasmic reticulum membrane. This is an uncharacterized protein from Schizosaccharomyces pombe (strain 972 / ATCC 24843) (Fission yeast).